Reading from the N-terminus, the 160-residue chain is Sperm protein associated with the nucleus on the X chromosome N2 (160 aa).

Disordered regions lie at residues 1 to 48 (MEKP…TSEY) and 64 to 160 (SNQL…GEED). Residues 10–35 (GEKRKSPCDSNNRNDEMQETPNRDLA) are compositionally biased toward basic and acidic residues. Residues 64-79 (SNQLENDQSQENSVNP) are compositionally biased toward polar residues. Positions 81–97 (QEEEDEGSSQEDEDLDS) are enriched in acidic residues. Basic and acidic residues predominate over residues 136-148 (SSERSSQEEKDPD).

This sequence belongs to the SPAN-X family.

The sequence is that of Sperm protein associated with the nucleus on the X chromosome N2 (SPANXN2) from Pongo pygmaeus (Bornean orangutan).